The following is a 371-amino-acid chain: Cell division control protein 3 (371 aa).

Positions 22–307 (AGIDFNIMTV…DEYKTREIGL (286 aa)) constitute a Septin-type G domain. The segment at 32–39 (GSNGLGKS) is G1 motif. GTP-binding positions include 32 to 39 (GSNGLGKS), G116, 195 to 203 (KSDLLSDSE), and R257. Residues 113 to 116 (EVDG) form a G3 motif region. Positions 194–197 (GKSD) are G4 motif.

This sequence belongs to the TRAFAC class TrmE-Era-EngA-EngB-Septin-like GTPase superfamily. Septin GTPase family. As to quaternary structure, component of the septin complex.

Septins are GTPases involved in cytokinesis. The septins localize to the site of cleavage and act as a structural scaffold that recruits different components involved in diverse processes at specific stages during the cell cycle. Septins are also involved in cell morphogenesis, chitin deposition, cell cycle regulation, cell compartmentalization and spore wall formation. The polypeptide is Cell division control protein 3 (CDC3) (Encephalitozoon cuniculi (strain GB-M1) (Microsporidian parasite)).